Reading from the N-terminus, the 785-residue chain is Probable cationic amino acid transporter (785 aa).

15 consecutive transmembrane segments (helical) span residues 58–78 (LVSLGVGSCVGTGMYVVSGLV), 83–103 (AGPGVIVSFIIAAVASILSGV), 119–141 (AYTYSYVTVGEFVAFFIGWNLIL), 187–207 (YPDILALVIGILVTVIVALGV), 216–236 (VLNVINLVVWVFIMIAGLFFV), 251–271 (WSGVMQGAATCFYAFIGFDII), 291–311 (ASLVTCLTAYVSVSVILTLMV), 337–357 (IVAIGSIAGLTVSLLGSLFPM), 360–380 (VIYAMAGDGLLFRFLAHVSTY), 384–404 (PAVACVVSGFLSALLALLVSL), 407–427 (LIEMMSIGTLLAYTLVSVCVL), 568–588 (CVVLLFILIFCFCSLIIFGSG), 596–616 (WAVLLLVVLLLVLTLLVFIII), 628–648 (MAPCVPFVPASAMLVNVYLML), and 655–675 (WIRFGVWCFVGVLIYFGYGMW). A disordered region spans residues 715–785 (DQGPFQNWGK…VDDDLDDPLE (71 aa)). Residues 727–740 (QQKQPQQEQSEPQS) show a composition bias toward low complexity. Positions 775–785 (VVDDDLDDPLE) are enriched in acidic residues.

It belongs to the amino acid-polyamine-organocation (APC) superfamily.

The protein localises to the lysosome membrane. Functionally, may be involved in arginine transport. The protein is Probable cationic amino acid transporter (slc7a14a) of Danio rerio (Zebrafish).